The following is a 498-amino-acid chain: Lysine--tRNA ligase (498 aa).

2 residues coordinate Mg(2+): glutamate 411 and glutamate 418.

It belongs to the class-II aminoacyl-tRNA synthetase family. As to quaternary structure, homodimer. The cofactor is Mg(2+).

The protein resides in the cytoplasm. The catalysed reaction is tRNA(Lys) + L-lysine + ATP = L-lysyl-tRNA(Lys) + AMP + diphosphate. In Enterococcus faecalis (strain ATCC 700802 / V583), this protein is Lysine--tRNA ligase.